Here is a 308-residue protein sequence, read N- to C-terminus: Elongation factor Ts (308 aa).

The involved in Mg(2+) ion dislocation from EF-Tu stretch occupies residues 80–83; that stretch reads TDFV.

Belongs to the EF-Ts family.

It is found in the cytoplasm. Functionally, associates with the EF-Tu.GDP complex and induces the exchange of GDP to GTP. It remains bound to the aminoacyl-tRNA.EF-Tu.GTP complex up to the GTP hydrolysis stage on the ribosome. This Rhizobium etli (strain CIAT 652) protein is Elongation factor Ts.